A 239-amino-acid polypeptide reads, in one-letter code: Fatty acid metabolism regulator protein (239 aa).

The region spanning 6-74 (QSPAGFAEEY…HGKPTKVNNF (69 aa)) is the HTH gntR-type domain. Residues 34-53 (ERELSELIGVTRTTLREVLQ) constitute a DNA-binding region (H-T-H motif).

In terms of assembly, homodimer.

It localises to the cytoplasm. In terms of biological role, multifunctional regulator of fatty acid metabolism. The protein is Fatty acid metabolism regulator protein of Yersinia enterocolitica serotype O:8 / biotype 1B (strain NCTC 13174 / 8081).